The following is a 545-amino-acid chain: Chaperonin GroEL (545 aa).

ATP contacts are provided by residues Thr30–Pro33, Lys51, Asp87–Thr91, Gly415, and Asp495.

Belongs to the chaperonin (HSP60) family. As to quaternary structure, forms a cylinder of 14 subunits composed of two heptameric rings stacked back-to-back. Interacts with the co-chaperonin GroES.

It is found in the cytoplasm. The catalysed reaction is ATP + H2O + a folded polypeptide = ADP + phosphate + an unfolded polypeptide.. In terms of biological role, together with its co-chaperonin GroES, plays an essential role in assisting protein folding. The GroEL-GroES system forms a nano-cage that allows encapsulation of the non-native substrate proteins and provides a physical environment optimized to promote and accelerate protein folding. This Shewanella putrefaciens (strain CN-32 / ATCC BAA-453) protein is Chaperonin GroEL.